A 548-amino-acid chain; its full sequence is Glucose-6-phosphate isomerase (548 aa).

The Proton donor role is filled by Glu354. Catalysis depends on residues His385 and Lys513.

The protein belongs to the GPI family.

It is found in the cytoplasm. The enzyme catalyses alpha-D-glucose 6-phosphate = beta-D-fructose 6-phosphate. It participates in carbohydrate biosynthesis; gluconeogenesis. It functions in the pathway carbohydrate degradation; glycolysis; D-glyceraldehyde 3-phosphate and glycerone phosphate from D-glucose: step 2/4. Catalyzes the reversible isomerization of glucose-6-phosphate to fructose-6-phosphate. This chain is Glucose-6-phosphate isomerase, found in Marinomonas sp. (strain MWYL1).